Here is a 345-residue protein sequence, read N- to C-terminus: Hydroxymethylglutaryl-CoA synthase (345 aa).

Aspartate 28 provides a ligand contact to (3S)-3-hydroxy-3-methylglutaryl-CoA. Residue glutamate 80 is the Proton donor/acceptor of the active site. (3S)-3-hydroxy-3-methylglutaryl-CoA contacts are provided by cysteine 112 and threonine 153. Residue cysteine 112 is the Acyl-thioester intermediate of the active site. A CoA-binding site is contributed by arginine 199. (3S)-3-hydroxy-3-methylglutaryl-CoA-binding residues include threonine 201 and histidine 234. Residue histidine 234 is the Proton donor/acceptor of the active site. Lysine 239 serves as a coordination point for CoA. Residues arginine 243, asparagine 266, and serine 296 each coordinate (3S)-3-hydroxy-3-methylglutaryl-CoA.

This sequence belongs to the thiolase-like superfamily. Archaeal HMG-CoA synthase family. As to quaternary structure, interacts with acetoacetyl-CoA thiolase that catalyzes the precedent step in the pathway and with a DUF35 protein. The acetoacetyl-CoA thiolase/HMG-CoA synthase complex channels the intermediate via a fused CoA-binding site, which allows for efficient coupling of the endergonic thiolase reaction with the exergonic HMGCS reaction.

It catalyses the reaction acetoacetyl-CoA + acetyl-CoA + H2O = (3S)-3-hydroxy-3-methylglutaryl-CoA + CoA + H(+). Its pathway is metabolic intermediate biosynthesis; (R)-mevalonate biosynthesis; (R)-mevalonate from acetyl-CoA: step 2/3. Functionally, catalyzes the condensation of acetyl-CoA with acetoacetyl-CoA to form 3-hydroxy-3-methylglutaryl-CoA (HMG-CoA). Functions in the mevalonate (MVA) pathway leading to isopentenyl diphosphate (IPP), a key precursor for the biosynthesis of isoprenoid compounds that are building blocks of archaeal membrane lipids. This Methanobrevibacter smithii (strain ATCC 35061 / DSM 861 / OCM 144 / PS) protein is Hydroxymethylglutaryl-CoA synthase.